Consider the following 155-residue polypeptide: Acyl-CoA-binding domain-containing protein 3 (155 aa).

Positions 3 to 88 (LQEDFEEYAE…VKQLQEEAAA (86 aa)) constitute an ACB domain. An acyl-CoA contacts are provided by residues Lys15, 30-34 (YGLYK), Lys56, and Tyr75.

It belongs to the ACBP family. As to expression, highly expressed in leaves. Expressed at low levels in roots and seeds.

It localises to the cytoplasm. The protein localises to the cytosol. Functionally, binds medium- and long-chain acyl-CoA esters with high affinity. Can interact in vitro with linolenoyl-CoA. Binds phosphatidic acid (PA) and phosphatidylcholine (PC) in vitro. May play a role in the biosynthesis of phospholipids. This Oryza sativa subsp. japonica (Rice) protein is Acyl-CoA-binding domain-containing protein 3.